The sequence spans 259 residues: MSAVTAVKPEDVYQINDLNLWYGEHHALKNINLTIPEYEITAIIGPSGCGKSTFIKTLNLMINMVPNVKMTGEISYNGTNVLNSKVDLVELRKKVGMVFQKGNPFPQSIFDNVAYGPRIHGLKNKKELNERVEKALVDVALWDEVKDRLHSQALGLSGGQQQRLCIARALATNPDVLLMDEPTSALDPVSTLKIEELMLKLKEKYTIAIVTHNMQQASRISDQTAFFLMGELIECNDTVKMFSSPDDHRTKDYITGRFG.

The ABC transporter domain maps to 7–254 (VKPEDVYQIN…PDDHRTKDYI (248 aa)). 45–52 (GPSGCGKS) contributes to the ATP binding site.

This sequence belongs to the ABC transporter superfamily. Phosphate importer (TC 3.A.1.7) family. In terms of assembly, the complex is composed of two ATP-binding proteins (PstB), two transmembrane proteins (PstC and PstA) and a solute-binding protein (PstS).

The protein resides in the cell membrane. It catalyses the reaction phosphate(out) + ATP + H2O = ADP + 2 phosphate(in) + H(+). Part of the ABC transporter complex PstSACB involved in phosphate import. Responsible for energy coupling to the transport system. The chain is Phosphate import ATP-binding protein PstB 1 from Bacillus licheniformis (strain ATCC 14580 / DSM 13 / JCM 2505 / CCUG 7422 / NBRC 12200 / NCIMB 9375 / NCTC 10341 / NRRL NRS-1264 / Gibson 46).